A 430-amino-acid chain; its full sequence is Glutamate-1-semialdehyde 2,1-aminomutase (430 aa).

Lysine 267 bears the N6-(pyridoxal phosphate)lysine mark.

The protein belongs to the class-III pyridoxal-phosphate-dependent aminotransferase family. HemL subfamily. Homodimer. It depends on pyridoxal 5'-phosphate as a cofactor.

The protein localises to the cytoplasm. The enzyme catalyses (S)-4-amino-5-oxopentanoate = 5-aminolevulinate. It functions in the pathway porphyrin-containing compound metabolism; protoporphyrin-IX biosynthesis; 5-aminolevulinate from L-glutamyl-tRNA(Glu): step 2/2. This is Glutamate-1-semialdehyde 2,1-aminomutase from Anaeromyxobacter sp. (strain K).